A 241-amino-acid chain; its full sequence is Spiralin (241 aa).

The signal sequence occupies residues 1–23 (MKKLLSILAVFGVSAVGTTSVVA). Cys24 carries N-palmitoyl cysteine lipidation. Cys24 carries S-diacylglycerol cysteine lipidation.

It belongs to the spiralin family. Seems to occur as dimer, tetramers, and large oligomers of identical chains. Post-translationally, palmitate and stearate are the major lipid components.

The protein localises to the cell membrane. Its function is as follows. Major membrane protein of spiroplasma. In Spiroplasma citri, this protein is Spiralin (spi).